The chain runs to 282 residues: UDP-3-O-acyl-N-acetylglucosamine deacetylase (282 aa).

Zn(2+)-binding residues include histidine 74, histidine 226, and aspartate 230. The active-site Proton donor is the histidine 253.

Belongs to the LpxC family. The cofactor is Zn(2+).

It carries out the reaction a UDP-3-O-[(3R)-3-hydroxyacyl]-N-acetyl-alpha-D-glucosamine + H2O = a UDP-3-O-[(3R)-3-hydroxyacyl]-alpha-D-glucosamine + acetate. It functions in the pathway glycolipid biosynthesis; lipid IV(A) biosynthesis; lipid IV(A) from (3R)-3-hydroxytetradecanoyl-[acyl-carrier-protein] and UDP-N-acetyl-alpha-D-glucosamine: step 2/6. Catalyzes the hydrolysis of UDP-3-O-myristoyl-N-acetylglucosamine to form UDP-3-O-myristoylglucosamine and acetate, the committed step in lipid A biosynthesis. The polypeptide is UDP-3-O-acyl-N-acetylglucosamine deacetylase (Aquifex aeolicus (strain VF5)).